A 319-amino-acid chain; its full sequence is Olfactory receptor 8U3 (319 aa).

Residues 1–25 (MAEVNISYVSEFILKGITDRPELQA) are Extracellular-facing. A glycan (N-linked (GlcNAc...) asparagine) is linked at Asn-5. A helical membrane pass occupies residues 26 to 46 (PCFVMFLTIYLVTVLGNLGLI). At 47 to 54 (VIIRVDSR) the chain is on the cytoplasmic side. A helical transmembrane segment spans residues 55 to 75 (LHTPMYFFLSHLAFVDLCYSS). Residues 76–99 (AITPKMMVNFVVERNTIPFHACAT) are Extracellular-facing. Residues Cys-97 and Cys-189 are joined by a disulfide bond. A helical transmembrane segment spans residues 100–120 (QLGCFLTFMITECFLLASMAY). The Cytoplasmic segment spans residues 121-133 (DRYVAICSPLHYS). The helical transmembrane segment at 134–154 (TLMSKRVCIQLVAVPYVYSFL) threads the bilayer. Topologically, residues 155–196 (VALFHTIITFRLTYCGPNVINHFYCDDLPLLALSCSDTHMKE) are extracellular. The chain crosses the membrane as a helical span at residues 197–217 (ILIFAFAGFDMICSSSIVLTS). The Cytoplasmic portion of the chain corresponds to 218–237 (YLFIIAAILRIRSTQGRRKA). The chain crosses the membrane as a helical span at residues 238-258 (ISTCGSHMVAVTIFYGTLIFM). Topologically, residues 259 to 271 (YLQPKSNHSLDTD) are extracellular. Asn-265 carries an N-linked (GlcNAc...) asparagine glycan. A helical transmembrane segment spans residues 272-292 (KMASVFYTVVIPMLNPLIYSL). The Cytoplasmic portion of the chain corresponds to 293-319 (RNKEVKDASKKALDKGYETLKILRLSK).

This sequence belongs to the G-protein coupled receptor 1 family.

The protein resides in the cell membrane. Functionally, potential odorant receptor. In Mus musculus (Mouse), this protein is Olfactory receptor 8U3.